We begin with the raw amino-acid sequence, 73 residues long: Disintegrin cerastin (73 aa).

Residues 1–73 (EAGEECDCGT…ADCPRNGLYG (73 aa)) form the Disintegrin domain. 6 cysteine pairs are disulfide-bonded: cysteine 6-cysteine 21, cysteine 8-cysteine 16, cysteine 15-cysteine 38, cysteine 29-cysteine 35, cysteine 34-cysteine 59, and cysteine 47-cysteine 66. The short motif at 51 to 53 (RGD) is the Cell attachment site element.

It belongs to the venom metalloproteinase (M12B) family. P-II subfamily. P-IIa sub-subfamily. In terms of assembly, monomer (disintegrin). Expressed by the venom gland.

It localises to the secreted. Functionally, inhibits fibrinogen interaction with platelets. Acts by binding to alpha-IIb/beta-3 (ITGA2B/ITGB3) on the platelet surface and inhibits aggregation induced by ADP, thrombin, platelet-activating factor and collagen. This chain is Disintegrin cerastin, found in Crotalus cerastes cerastes (Mojave desert sidewinder).